The chain runs to 452 residues: Cell division protein FtsZ (452 aa).

GTP-binding positions include 24-28 (GAGSN), 111-113 (GTG), Glu-142, Arg-146, and Asp-190.

Belongs to the FtsZ family. In terms of assembly, homodimer. Polymerizes to form a dynamic ring structure in a strictly GTP-dependent manner. Interacts directly with several other division proteins.

It is found in the cytoplasm. Its function is as follows. Essential cell division protein that forms a contractile ring structure (Z ring) at the future cell division site. The regulation of the ring assembly controls the timing and the location of cell division. One of the functions of the FtsZ ring is to recruit other cell division proteins to the septum to produce a new cell wall between the dividing cells. Binds GTP and shows GTPase activity. The protein is Cell division protein FtsZ of Rickettsia prowazekii (strain Madrid E).